Reading from the N-terminus, the 422-residue chain is RNA exonuclease 4 (422 aa).

The segment at M1 to I194 is disordered. Residue S15 is modified to Phosphoserine. Positions L26 to S40 are enriched in basic residues. 2 positions are modified to phosphoserine: S96 and S111. Composition is skewed to basic and acidic residues over residues N106–A127 and G151–H176. A Glycyl lysine isopeptide (Lys-Gly) (interchain with G-Cter in SUMO2) cross-link involves residue K115. In terms of domain architecture, Exonuclease spans A243 to Y394.

This sequence belongs to the REXO4 family. As to quaternary structure, can bind ESR1 and ESR2. This interaction is abrogated by estrogen and augmented by tamoxifen treatment.

The protein resides in the nucleus. It is found in the nucleolus. The chain is RNA exonuclease 4 (REXO4) from Homo sapiens (Human).